Here is a 156-residue protein sequence, read N- to C-terminus: ATP synthase subunit b (156 aa).

The helical transmembrane segment at 12 to 32 (IAFAIFVLFCMKFIWPALMGA) threads the bilayer.

Belongs to the ATPase B chain family. In terms of assembly, F-type ATPases have 2 components, F(1) - the catalytic core - and F(0) - the membrane proton channel. F(1) has five subunits: alpha(3), beta(3), gamma(1), delta(1), epsilon(1). F(0) has three main subunits: a(1), b(2) and c(10-14). The alpha and beta chains form an alternating ring which encloses part of the gamma chain. F(1) is attached to F(0) by a central stalk formed by the gamma and epsilon chains, while a peripheral stalk is formed by the delta and b chains.

It is found in the cell inner membrane. Its function is as follows. F(1)F(0) ATP synthase produces ATP from ADP in the presence of a proton or sodium gradient. F-type ATPases consist of two structural domains, F(1) containing the extramembraneous catalytic core and F(0) containing the membrane proton channel, linked together by a central stalk and a peripheral stalk. During catalysis, ATP synthesis in the catalytic domain of F(1) is coupled via a rotary mechanism of the central stalk subunits to proton translocation. Functionally, component of the F(0) channel, it forms part of the peripheral stalk, linking F(1) to F(0). The chain is ATP synthase subunit b from Psychrobacter sp. (strain PRwf-1).